The sequence spans 76 residues: ATP synthase subunit c (76 aa).

Helical transmembrane passes span 12–32 and 54–74; these read LGSI…GIIF and ILGF…PFVY.

It belongs to the ATPase C chain family. F-type ATPases have 2 components, F(1) - the catalytic core - and F(0) - the membrane proton channel. F(1) has five subunits: alpha(3), beta(3), gamma(1), delta(1), epsilon(1). F(0) has three main subunits: a(1), b(2) and c(10-14). The alpha and beta chains form an alternating ring which encloses part of the gamma chain. F(1) is attached to F(0) by a central stalk formed by the gamma and epsilon chains, while a peripheral stalk is formed by the delta and b chains.

Its subcellular location is the cell membrane. In terms of biological role, f(1)F(0) ATP synthase produces ATP from ADP in the presence of a proton or sodium gradient. F-type ATPases consist of two structural domains, F(1) containing the extramembraneous catalytic core and F(0) containing the membrane proton channel, linked together by a central stalk and a peripheral stalk. During catalysis, ATP synthesis in the catalytic domain of F(1) is coupled via a rotary mechanism of the central stalk subunits to proton translocation. Functionally, key component of the F(0) channel; it plays a direct role in translocation across the membrane. A homomeric c-ring of between 10-14 subunits forms the central stalk rotor element with the F(1) delta and epsilon subunits. This chain is ATP synthase subunit c, found in Streptomyces coelicolor (strain ATCC BAA-471 / A3(2) / M145).